The primary structure comprises 231 residues: Putative transglycosylase H16_A0665 (231 aa).

A helical transmembrane segment spans residues 8–28 (FIKLLVLAVIGGALLAAIAIL).

It belongs to the glycosyltransferase 51 family.

It is found in the secreted. Its subcellular location is the membrane. It participates in cell wall biogenesis; peptidoglycan biosynthesis. Cell wall formation. This is Putative transglycosylase H16_A0665 from Cupriavidus necator (strain ATCC 17699 / DSM 428 / KCTC 22496 / NCIMB 10442 / H16 / Stanier 337) (Ralstonia eutropha).